We begin with the raw amino-acid sequence, 545 residues long: G-protein coupled receptor 161 (545 aa).

The Extracellular portion of the chain corresponds to 1–46 (MDFVQHALLTASRGALTMSLNSSLSYRKELSNLTATEGGEGGAVSE). N-linked (GlcNAc...) asparagine glycans are attached at residues Asn21 and Asn32. The chain crosses the membrane as a helical span at residues 47–67 (FIAIIIITVLVCLGNLVIVVT). Over 68 to 80 (LYKKSYLLTLSNK) the chain is Cytoplasmic. Residues 81-101 (FVFSLTLSNFLLSVLVLPFVV) traverse the membrane as a helical segment. At 102-117 (TSSIRREWIFGVVWCN) the chain is on the extracellular side. A disulfide bridge connects residues Cys116 and Cys194. Asn117 carries N-linked (GlcNAc...) asparagine glycosylation. A helical transmembrane segment spans residues 118-139 (FSALLYLLISSASMLTLGVIAI). Residues 140-159 (DRYYAVLYPMVYPMKITGNR) are Cytoplasmic-facing. The helical transmembrane segment at 160–180 (AVMALVYIWLHSLIGCLPPLF) threads the bilayer. Residues 181-205 (GWSSVEFDEFKWMCVAAWHQEPGYT) are Extracellular-facing. The chain crosses the membrane as a helical span at residues 206–226 (IFWQIWCALFPFLIMLVCYGF). The Cytoplasmic portion of the chain corresponds to 227 to 285 (IFRVARVKARKVHCGTVVTVEEDSQRSGRKNSSTSTSSSGSRRNALQGVVYSANQCKAL). Residues 286–306 (ITILVVIGAFMVTWGPYMVVI) form a helical membrane-spanning segment. At 307-322 (TSEALWGKNCVSPTLE) the chain is on the extracellular side. The helical transmembrane segment at 323–343 (TWATWLSFTSAICHPLIYGLW) threads the bilayer. At 344–545 (NKTVRKELLG…EGNVLAAEQR (202 aa)) the chain is on the cytoplasmic side.

This sequence belongs to the G-protein coupled receptor 1 family.

The protein localises to the cell projection. It is found in the cilium membrane. Its subcellular location is the cell membrane. Functionally, key negative regulator of Shh signaling, which promotes the processing of GLI3 into GLI3R during neural tube development. Recruited by TULP3 and the IFT-A complex to primary cilia and acts as a regulator of the PKA-dependent basal repression machinery in Shh signaling by increasing cAMP levels, leading to promote the PKA-dependent processing of GLI3 into GLI3R and repress the Shh signaling. In presence of SHH, it is removed from primary cilia and is internalized into recycling endosomes, preventing its activity and allowing activation of the Shh signaling. Its ligand is unknown. The chain is G-protein coupled receptor 161 (Gpr161) from Mus musculus (Mouse).